The chain runs to 968 residues: Dynein axonemal intermediate chain 3 (968 aa).

Basic and acidic residues predominate over residues 1 to 33 (MKDTSSKRPKSKEANKKKTKDKSNADNLPKPEE). 2 disordered regions span residues 1 to 39 (MKDT…ASEP) and 136 to 166 (KPPA…PEPQ). Over residues 141 to 157 (GADEQMEDEEQQEEEEE) the composition is skewed to acidic residues. WD repeat units follow at residues 407 to 447 (ECPD…DRLQ), 480 to 536 (GHKA…VMVH), and 712 to 753 (VYSK…RQPS). Positions 830 to 857 (LHTHTDQLRVLEERVREAKQNLLAVSDR) form a coiled coil. The span at 897 to 919 (KRQSDHQKKKKETEAEQQKKKTE) shows a compositional bias: basic and acidic residues. Residues 897–930 (KRQSDHQKKKKETEAEQQKKKTELVTPPKQEEEV) form a disordered region.

Part of the multisubunit axonemal dynein complex formed at least of two heavy chains and a number of intermediate and light chains.

It is found in the cytoplasm. In terms of biological role, may be involved in the regulation of cilia function. The sequence is that of Dynein axonemal intermediate chain 3 (dnai3) from Danio rerio (Zebrafish).